A 443-amino-acid chain; its full sequence is Thymidine phosphorylase (443 aa).

The protein belongs to the thymidine/pyrimidine-nucleoside phosphorylase family. In terms of assembly, homodimer.

It carries out the reaction thymidine + phosphate = 2-deoxy-alpha-D-ribose 1-phosphate + thymine. The protein operates within pyrimidine metabolism; dTMP biosynthesis via salvage pathway; dTMP from thymine: step 1/2. Functionally, the enzymes which catalyze the reversible phosphorolysis of pyrimidine nucleosides are involved in the degradation of these compounds and in their utilization as carbon and energy sources, or in the rescue of pyrimidine bases for nucleotide synthesis. This is Thymidine phosphorylase from Shewanella frigidimarina (strain NCIMB 400).